The sequence spans 694 residues: Soluble starch synthase 2-2, chloroplastic/amyloplastic (694 aa).

The transit peptide at 1–15 (MSGAIASSPAATLFL) directs the protein to the chloroplast. The interval 93–197 (KADHVEDSVS…DSENKESGPL (105 aa)) is disordered. Residues 127 to 142 (APVSKPKVDPSVPASK) are compositionally biased toward low complexity. Residues 156–176 (AALDKKEDVGVAEPLEAKADA) show a composition bias toward basic and acidic residues. Low complexity predominate over residues 177–186 (GGDAGAVSSA). Residue Lys-217 coordinates ADP-alpha-D-glucose.

Belongs to the glycosyltransferase 1 family. Bacterial/plant glycogen synthase subfamily. Expressed in leaves and weakly in endosperm and roots.

The protein localises to the plastid. It localises to the amyloplast. The protein resides in the chloroplast. It catalyses the reaction [(1-&gt;4)-alpha-D-glucosyl](n) + ADP-alpha-D-glucose = [(1-&gt;4)-alpha-D-glucosyl](n+1) + ADP + H(+). It participates in glycan biosynthesis; starch biosynthesis. Its function is as follows. May contribute to the deposition of transient starch in chloroplasts of leaves. The sequence is that of Soluble starch synthase 2-2, chloroplastic/amyloplastic (SSII-2) from Oryza sativa subsp. japonica (Rice).